The chain runs to 113 residues: PTS system fructose-like EIIB component 3 (113 aa).

The 100-residue stretch at 1-100 (MAYLVAVTAC…PQRVMSAVRK (100 aa)) folds into the PTS EIIB type-2 domain. Cys10 acts as the Phosphocysteine intermediate in catalysis. Cys10 is subject to Phosphocysteine; by EIIA.

The protein localises to the cytoplasm. The catalysed reaction is D-fructose(out) + N(pros)-phospho-L-histidyl-[protein] = D-fructose 1-phosphate(in) + L-histidyl-[protein]. Its function is as follows. The phosphoenolpyruvate-dependent sugar phosphotransferase system (sugar PTS), a major carbohydrate active transport system, catalyzes the phosphorylation of incoming sugar substrates concomitantly with their translocation across the cell membrane. This Escherichia coli (strain K12) protein is PTS system fructose-like EIIB component 3 (frwD).